Here is a 662-residue protein sequence, read N- to C-terminus: Acetyl-coenzyme A synthetase (662 aa).

Residues 197–200 (RKGK) and threonine 317 each bind CoA. ATP contacts are provided by residues 393 to 395 (GEP), 417 to 422 (DTWWQT), aspartate 510, and arginine 525. A CoA-binding site is contributed by serine 533. Arginine 536 is an ATP binding site. Mg(2+) contacts are provided by histidine 549 and valine 552. Lysine 623 carries the N6-acetyllysine modification.

Belongs to the ATP-dependent AMP-binding enzyme family. The cofactor is Mg(2+). Acetylated. Deacetylation by the SIR2-homolog deacetylase activates the enzyme.

The catalysed reaction is acetate + ATP + CoA = acetyl-CoA + AMP + diphosphate. Functionally, catalyzes the conversion of acetate into acetyl-CoA (AcCoA), an essential intermediate at the junction of anabolic and catabolic pathways. AcsA undergoes a two-step reaction. In the first half reaction, AcsA combines acetate with ATP to form acetyl-adenylate (AcAMP) intermediate. In the second half reaction, it can then transfer the acetyl group from AcAMP to the sulfhydryl group of CoA, forming the product AcCoA. The polypeptide is Acetyl-coenzyme A synthetase (Helicobacter acinonychis (strain Sheeba)).